A 319-amino-acid polypeptide reads, in one-letter code: Acetyl esterase (319 aa).

Residues 91 to 93 (HGG) carry the Involved in the stabilization of the negatively charged intermediate by the formation of the oxyanion hole motif. Active-site residues include serine 165, aspartate 262, and histidine 292.

This sequence belongs to the 'GDXG' lipolytic enzyme family. In terms of assembly, homodimer. Interacts with MalT and MelA.

It is found in the cytoplasm. Displays esterase activity towards short chain fatty esters (acyl chain length of up to 8 carbons). Able to hydrolyze triacetylglycerol (triacetin) and tributyrylglycerol (tributyrin), but not trioleylglycerol (triolein) or cholesterol oleate. Negatively regulates MalT activity by antagonizing maltotriose binding. Inhibits MelA galactosidase activity. In Escherichia coli O127:H6 (strain E2348/69 / EPEC), this protein is Acetyl esterase.